The primary structure comprises 510 residues: Flagellin A (510 aa).

This sequence belongs to the bacterial flagellin family. As to quaternary structure, heteromer of FlaA and FlaB. FlaB is located proximal to the hook while the remainder of the filament is composed of the predominant FlaA.

It localises to the secreted. The protein resides in the bacterial flagellum. In terms of biological role, flagellin is the subunit protein which polymerizes to form the filaments of bacterial flagella. Important for motility and virulence. This Helicobacter pylori (strain ATCC 700392 / 26695) (Campylobacter pylori) protein is Flagellin A (flaA).